A 160-amino-acid chain; its full sequence is Ureidoglycolate lyase (160 aa).

It belongs to the ureidoglycolate lyase family. In terms of assembly, homodimer. Ni(2+) serves as cofactor.

It catalyses the reaction (S)-ureidoglycolate = urea + glyoxylate. Its pathway is nitrogen metabolism; (S)-allantoin degradation. In terms of biological role, catalyzes the catabolism of the allantoin degradation intermediate (S)-ureidoglycolate, generating urea and glyoxylate. Involved in the anaerobic utilization of allantoin as sole nitrogen source. Reinforces the induction of genes involved in the degradation of allantoin and glyoxylate by producing glyoxylate. This Escherichia coli (strain SMS-3-5 / SECEC) protein is Ureidoglycolate lyase.